Reading from the N-terminus, the 209-residue chain is Uracil phosphoribosyltransferase (209 aa).

5-phospho-alpha-D-ribose 1-diphosphate is bound by residues Arg-79, Arg-104, and 131–139 (DPMLATGNS). Uracil-binding positions include Ile-194 and 199 to 201 (GDA). Asp-200 serves as a coordination point for 5-phospho-alpha-D-ribose 1-diphosphate.

The protein belongs to the UPRTase family. The cofactor is Mg(2+).

It carries out the reaction UMP + diphosphate = 5-phospho-alpha-D-ribose 1-diphosphate + uracil. It functions in the pathway pyrimidine metabolism; UMP biosynthesis via salvage pathway; UMP from uracil: step 1/1. With respect to regulation, allosterically activated by GTP. Its function is as follows. Catalyzes the conversion of uracil and 5-phospho-alpha-D-ribose 1-diphosphate (PRPP) to UMP and diphosphate. This Sinorhizobium fredii (strain NBRC 101917 / NGR234) protein is Uracil phosphoribosyltransferase.